The primary structure comprises 248 residues: uncharacterized protein (248 aa).

A helical membrane pass occupies residues 104–122 (CDVAACVGATWIAGGFAGA).

It localises to the membrane. This is an uncharacterized protein from Escherichia coli (strain K12).